The chain runs to 203 residues: FMN-dependent NADH:quinone oxidoreductase 5 (203 aa).

FMN contacts are provided by residues serine 9, 15 to 17, 95 to 98, and 139 to 142; these read SAS, MYNF, and TSGG.

Belongs to the azoreductase type 1 family. As to quaternary structure, homodimer. The cofactor is FMN.

The catalysed reaction is 2 a quinone + NADH + H(+) = 2 a 1,4-benzosemiquinone + NAD(+). The enzyme catalyses N,N-dimethyl-1,4-phenylenediamine + anthranilate + 2 NAD(+) = 2-(4-dimethylaminophenyl)diazenylbenzoate + 2 NADH + 2 H(+). Its function is as follows. Quinone reductase that provides resistance to thiol-specific stress caused by electrophilic quinones. Also exhibits azoreductase activity. Catalyzes the reductive cleavage of the azo bond in aromatic azo compounds to the corresponding amines. The sequence is that of FMN-dependent NADH:quinone oxidoreductase 5 from Pseudomonas fluorescens (strain ATCC BAA-477 / NRRL B-23932 / Pf-5).